The following is a 1113-amino-acid chain: Antigenic protein P1 (1113 aa).

A helical transmembrane segment spans residues 7 to 27 (IIAVVAIASAIVTGVVVIVVV). N-linked (GlcNAc...) asparagine glycans are attached at residues Asn-121, Asn-207, Asn-225, Asn-233, Asn-274, Asn-533, Asn-576, Asn-622, Asn-675, Asn-679, Asn-730, Asn-753, Asn-880, Asn-899, Asn-907, Asn-972, and Asn-995. Residues 159 to 473 (VFGQRAVAWA…SYVNMAHAFG (315 aa)) enclose the Peptidase M60 domain. Positions 648–800 (LDPHQVEYEV…TEESSVDVSK (153 aa)) constitute a PA14 domain.

It is found in the membrane. In Entamoeba histolytica (strain ATCC 30459 / HM-1:IMSS / ABRM), this protein is Antigenic protein P1.